Reading from the N-terminus, the 218-residue chain is 3-dehydroquinate dehydratase (218 aa).

3-dehydroquinate contacts are provided by residues 29-31 (EFR) and R56. Catalysis depends on H116, which acts as the Proton donor/acceptor. K142 acts as the Schiff-base intermediate with substrate in catalysis. Positions 180, 200, and 204 each coordinate 3-dehydroquinate.

Belongs to the type-I 3-dehydroquinase family. Homodimer.

It carries out the reaction 3-dehydroquinate = 3-dehydroshikimate + H2O. It participates in metabolic intermediate biosynthesis; chorismate biosynthesis; chorismate from D-erythrose 4-phosphate and phosphoenolpyruvate: step 3/7. Involved in the third step of the chorismate pathway, which leads to the biosynthesis of aromatic amino acids. Catalyzes the cis-dehydration of 3-dehydroquinate (DHQ) and introduces the first double bond of the aromatic ring to yield 3-dehydroshikimate. The polypeptide is 3-dehydroquinate dehydratase (Methanococcus vannielii (strain ATCC 35089 / DSM 1224 / JCM 13029 / OCM 148 / SB)).